We begin with the raw amino-acid sequence, 284 residues long: MQHPFHSYPAPAKLNLLLHVVGKRPDGYHLLETVFRFIDFGDTLELAVRDDGQIVLLTPTDGVPPEQDLTVRAARLLQRESGCRLGASIKLEKRTPMGGGLGGGSSDAATALIALNRLWGLAWPRERLQALGLQLGADVPVFIFGRNALATGVGEVLEPIPLKPAWYLVIHPQVHVSTIEVFRNFSQTVLTEIGRVGIMRILETTQQRRNDLQSVVEKRFPAVNEVLSELRKYGSPLMTGSGSCVFLEFESKDEADKVYRVLSQKYQGFVAEGLDVHPLFDSAE.

K13 is an active-site residue. 96–106 (PMGGGLGGGSS) is an ATP binding site. D138 is a catalytic residue.

It belongs to the GHMP kinase family. IspE subfamily.

It carries out the reaction 4-CDP-2-C-methyl-D-erythritol + ATP = 4-CDP-2-C-methyl-D-erythritol 2-phosphate + ADP + H(+). Its pathway is isoprenoid biosynthesis; isopentenyl diphosphate biosynthesis via DXP pathway; isopentenyl diphosphate from 1-deoxy-D-xylulose 5-phosphate: step 3/6. Catalyzes the phosphorylation of the position 2 hydroxy group of 4-diphosphocytidyl-2C-methyl-D-erythritol. The protein is 4-diphosphocytidyl-2-C-methyl-D-erythritol kinase of Chromobacterium violaceum (strain ATCC 12472 / DSM 30191 / JCM 1249 / CCUG 213 / NBRC 12614 / NCIMB 9131 / NCTC 9757 / MK).